The sequence spans 432 residues: Enolase (432 aa).

Gln167 lines the (2R)-2-phosphoglycerate pocket. Residue Glu209 is the Proton donor of the active site. Residues Asp246, Glu291, and Asp318 each coordinate Mg(2+). Residues Lys343, Arg372, Ser373, and Lys394 each coordinate (2R)-2-phosphoglycerate. The Proton acceptor role is filled by Lys343.

The protein belongs to the enolase family. Component of the RNA degradosome, a multiprotein complex involved in RNA processing and mRNA degradation. It depends on Mg(2+) as a cofactor.

It is found in the cytoplasm. The protein localises to the secreted. It localises to the cell surface. It carries out the reaction (2R)-2-phosphoglycerate = phosphoenolpyruvate + H2O. It participates in carbohydrate degradation; glycolysis; pyruvate from D-glyceraldehyde 3-phosphate: step 4/5. Functionally, catalyzes the reversible conversion of 2-phosphoglycerate (2-PG) into phosphoenolpyruvate (PEP). It is essential for the degradation of carbohydrates via glycolysis. This Aliivibrio salmonicida (strain LFI1238) (Vibrio salmonicida (strain LFI1238)) protein is Enolase.